The following is a 514-amino-acid chain: Histidine ammonia-lyase (514 aa).

The segment at residues 143 to 145 is a cross-link (5-imidazolinone (Cys-Gly)); sequence CSG. Serine 144 carries the post-translational modification 2,3-didehydroalanine (Ser).

This sequence belongs to the PAL/histidase family. In terms of processing, contains an active site 4-methylidene-imidazol-5-one (MIO), which is formed autocatalytically by cyclization and dehydration of residues Cys-Ser-Gly.

The protein resides in the cytoplasm. The enzyme catalyses L-histidine = trans-urocanate + NH4(+). The protein operates within amino-acid degradation; L-histidine degradation into L-glutamate; N-formimidoyl-L-glutamate from L-histidine: step 1/3. The sequence is that of Histidine ammonia-lyase (hutH) from Streptomyces griseus.